A 246-amino-acid polypeptide reads, in one-letter code: Outer membrane protein assembly factor BamD (246 aa).

The N-terminal stretch at 1–22 (MKKKNSIIFVFMILFFNSTVQS) is a signal peptide.

It belongs to the BamD family. Part of the Bam complex.

Its subcellular location is the cell outer membrane. In terms of biological role, part of the outer membrane protein assembly complex, which is involved in assembly and insertion of beta-barrel proteins into the outer membrane. The sequence is that of Outer membrane protein assembly factor BamD from Buchnera aphidicola subsp. Acyrthosiphon pisum (strain APS) (Acyrthosiphon pisum symbiotic bacterium).